The primary structure comprises 420 residues: UDP-N-acetylglucosamine 1-carboxyvinyltransferase (420 aa).

22–23 (KN) lines the phosphoenolpyruvate pocket. Arginine 93 serves as a coordination point for UDP-N-acetyl-alpha-D-glucosamine. The active-site Proton donor is the cysteine 117. Cysteine 117 is modified (2-(S-cysteinyl)pyruvic acid O-phosphothioketal). UDP-N-acetyl-alpha-D-glucosamine contacts are provided by aspartate 307 and valine 329.

Belongs to the EPSP synthase family. MurA subfamily.

It is found in the cytoplasm. The enzyme catalyses phosphoenolpyruvate + UDP-N-acetyl-alpha-D-glucosamine = UDP-N-acetyl-3-O-(1-carboxyvinyl)-alpha-D-glucosamine + phosphate. It participates in cell wall biogenesis; peptidoglycan biosynthesis. Cell wall formation. Adds enolpyruvyl to UDP-N-acetylglucosamine. The chain is UDP-N-acetylglucosamine 1-carboxyvinyltransferase from Marinobacter nauticus (strain ATCC 700491 / DSM 11845 / VT8) (Marinobacter aquaeolei).